Consider the following 513-residue polypeptide: ATP synthase subunit alpha (513 aa).

Residue 169 to 176 participates in ATP binding; the sequence is GDRQTGKT.

The protein belongs to the ATPase alpha/beta chains family. In terms of assembly, F-type ATPases have 2 components, CF(1) - the catalytic core - and CF(0) - the membrane proton channel. CF(1) has five subunits: alpha(3), beta(3), gamma(1), delta(1), epsilon(1). CF(0) has three main subunits: a(1), b(2) and c(9-12). The alpha and beta chains form an alternating ring which encloses part of the gamma chain. CF(1) is attached to CF(0) by a central stalk formed by the gamma and epsilon chains, while a peripheral stalk is formed by the delta and b chains.

It localises to the cell inner membrane. The enzyme catalyses ATP + H2O + 4 H(+)(in) = ADP + phosphate + 5 H(+)(out). Its function is as follows. Produces ATP from ADP in the presence of a proton gradient across the membrane. The alpha chain is a regulatory subunit. This chain is ATP synthase subunit alpha, found in Yersinia pseudotuberculosis serotype O:1b (strain IP 31758).